A 317-amino-acid polypeptide reads, in one-letter code: U5 small nuclear ribonucleoprotein TSSC4 (317 aa).

The segment covering Met-1–Leu-19 has biased composition (acidic residues). A disordered region spans residues Met-1–Val-74. The span at Pro-20–Ser-37 shows a compositional bias: low complexity. Phosphoserine is present on residues Ser-57, Ser-64, Ser-83, and Ser-92. The hom2; mediates interaction with the U5 snRNP complexes and required for spliceosomal tri-snRNP complex assembly stretch occupies residues Val-74–Ala-101. The segment at Ala-101–Tyr-152 is disordered. Residues Ala-108–Gly-117 show a composition bias toward polar residues. At Thr-124 the chain carries Phosphothreonine. Residues Val-146 to Arg-300 are interaction with SNRNP200. The segment at Leu-147–Leu-183 is hom3; mediates interaction with the U5 snRNP complexes. Residues Phe-198–Gly-238 are hom4; necessary for interaction with the PRPF19 complex and required for spliceosomal tri-snRNP complex assembly. Residue Lys-214 is modified to N6-acetyllysine. The segment at Val-216–Val-317 is disordered. Residues Glu-240–Gly-250 show a composition bias toward low complexity.

It belongs to the TSSC4 family. Interacts in a RNA-independent manner with distinct U5 snRNP-containing complexes, the mono-U5 snRNP and the post-splicing U5 snRNP-PRPF19 complex. Interacts with SNRNP200; the interaction is direct, excludes recruitment of C9ORF78 and WBP4 to SNRNP200 and negatively regulates its RNA helicase activity. Interacts with PRPF8; the interaction is direct. Expressed in placenta. Widely expressed in embryo and newborn.

Its subcellular location is the nucleus. The protein resides in the cytoplasm. Its function is as follows. Protein associated with the U5 snRNP, during its maturation and its post-splicing recycling and which is required for spliceosomal tri-snRNP complex assembly in the nucleus. Has a molecular sequestering activity and transiently hinders SNRNP200 binding sites for constitutive splicing factors that intervene later during the assembly of the spliceosome and splicing. Together with its molecular sequestering activity, may also function as a molecular adapter and placeholder, coordinating the assembly of the U5 snRNP and its association with the U4/U6 di-snRNP. The sequence is that of U5 small nuclear ribonucleoprotein TSSC4 from Mus musculus (Mouse).